Consider the following 429-residue polypeptide: Ribosomal RNA small subunit methyltransferase B (429 aa).

S-adenosyl-L-methionine contacts are provided by residues 254-260, Asp277, Asp303, and Asp322; that span reads CAAPGGK. Catalysis depends on Cys375, which acts as the Nucleophile.

This sequence belongs to the class I-like SAM-binding methyltransferase superfamily. RsmB/NOP family.

The protein resides in the cytoplasm. The catalysed reaction is cytidine(967) in 16S rRNA + S-adenosyl-L-methionine = 5-methylcytidine(967) in 16S rRNA + S-adenosyl-L-homocysteine + H(+). Functionally, specifically methylates the cytosine at position 967 (m5C967) of 16S rRNA. This is Ribosomal RNA small subunit methyltransferase B from Escherichia coli O17:K52:H18 (strain UMN026 / ExPEC).